The following is a 209-amino-acid chain: Dual specificity phosphatase 29 (209 aa).

One can recognise a Tyrosine-protein phosphatase domain in the interval 44–193; the sequence is NHVNEVWPNL…LRELDIQLAL (150 aa). Substrate is bound at residue 137–144; sequence NCAMGRSR. Cysteine 138 serves as the catalytic Phosphocysteine intermediate.

This sequence belongs to the protein-tyrosine phosphatase family. Non-receptor class dual specificity subfamily.

The protein resides in the cytoplasm. It is found in the nucleus. The enzyme catalyses O-phospho-L-tyrosyl-[protein] + H2O = L-tyrosyl-[protein] + phosphate. It catalyses the reaction O-phospho-L-seryl-[protein] + H2O = L-seryl-[protein] + phosphate. The catalysed reaction is O-phospho-L-threonyl-[protein] + H2O = L-threonyl-[protein] + phosphate. Dual specificity phosphatase able to dephosphorylate phosphotyrosine, phosphoserine and phosphothreonine residues within the same substrate, with a preference for phosphotyrosine as a substrate. Involved in the modulation of AMPK and MAPK1/2 signaling pathways. The protein is Dual specificity phosphatase 29 (dusp29) of Xenopus tropicalis (Western clawed frog).